A 778-amino-acid chain; its full sequence is Mitochondrial intermediate peptidase (778 aa).

A mitochondrion-targeting transit peptide spans 1–37 (MIRTVTRPRQWQRWVYSSCLLQRAVPPAAARQQPRFT). Histidine 557 provides a ligand contact to Zn(2+). The active site involves glutamate 558. Zn(2+) is bound by residues histidine 561 and histidine 564.

The protein belongs to the peptidase M3 family. It depends on Zn(2+) as a cofactor.

It localises to the mitochondrion matrix. It catalyses the reaction Release of an N-terminal octapeptide as second stage of processing of some proteins imported into the mitochondrion.. In terms of biological role, cleaves proteins, imported into the mitochondrion, to their mature size. While most mitochondrial precursor proteins are processed to the mature form in one step by mitochondrial processing peptidase (MPP), the sequential cleavage by MIP of an octapeptide after initial processing by MPP is a required step for a subgroup of nuclear-encoded precursor proteins destined for the matrix or the inner membrane. This chain is Mitochondrial intermediate peptidase (OCT1), found in Chaetomium globosum (strain ATCC 6205 / CBS 148.51 / DSM 1962 / NBRC 6347 / NRRL 1970) (Soil fungus).